The chain runs to 302 residues: Recombination-associated protein RdgC (302 aa).

The protein belongs to the RdgC family.

The protein resides in the cytoplasm. It is found in the nucleoid. Functionally, may be involved in recombination. The polypeptide is Recombination-associated protein RdgC (Xylella fastidiosa (strain M23)).